Reading from the N-terminus, the 688-residue chain is UvrABC system protein C (688 aa).

Over residues 1–14 the composition is skewed to basic and acidic residues; that stretch reads MSPLDQKNKPRGGA. Residues 1-20 form a disordered region; that stretch reads MSPLDQKNKPRGGADDLPPE. Residues 71-149 form the GIY-YIG domain; that stretch reads NAPGVYRMMN…IKRLRPRFNV (79 aa). The region spanning 259-294 is the UVR domain; it reads QKVKTEISAAMQQASEDLDFERAAIYRDRLAALSHV.

The protein belongs to the UvrC family. Interacts with UvrB in an incision complex.

The protein resides in the cytoplasm. In terms of biological role, the UvrABC repair system catalyzes the recognition and processing of DNA lesions. UvrC both incises the 5' and 3' sides of the lesion. The N-terminal half is responsible for the 3' incision and the C-terminal half is responsible for the 5' incision. This chain is UvrABC system protein C, found in Mesorhizobium japonicum (strain LMG 29417 / CECT 9101 / MAFF 303099) (Mesorhizobium loti (strain MAFF 303099)).